A 538-amino-acid chain; its full sequence is Phosphoenolpyruvate carboxykinase (ATP) (538 aa).

Residues arginine 64, tyrosine 205, and lysine 211 each coordinate substrate. Residues lysine 211, histidine 230, and 246 to 254 contribute to the ATP site; that span reads GLSGTGKTT. Residues lysine 211 and histidine 230 each contribute to the Mn(2+) site. Aspartate 267 contributes to the Mn(2+) binding site. ATP is bound by residues glutamate 295, arginine 331, 447–448, and threonine 453; that span reads RI. Position 331 (arginine 331) interacts with substrate.

It belongs to the phosphoenolpyruvate carboxykinase (ATP) family. In terms of assembly, monomer. The cofactor is Mn(2+).

The protein localises to the cytoplasm. It catalyses the reaction oxaloacetate + ATP = phosphoenolpyruvate + ADP + CO2. The protein operates within carbohydrate biosynthesis; gluconeogenesis. Involved in the gluconeogenesis. Catalyzes the conversion of oxaloacetate (OAA) to phosphoenolpyruvate (PEP) through direct phosphoryl transfer between the nucleoside triphosphate and OAA. The chain is Phosphoenolpyruvate carboxykinase (ATP) from Haemophilus influenzae (strain PittGG).